Reading from the N-terminus, the 446-residue chain is Exodeoxyribonuclease 7 large subunit (446 aa).

Belongs to the XseA family. As to quaternary structure, heterooligomer composed of large and small subunits.

It is found in the cytoplasm. The enzyme catalyses Exonucleolytic cleavage in either 5'- to 3'- or 3'- to 5'-direction to yield nucleoside 5'-phosphates.. Bidirectionally degrades single-stranded DNA into large acid-insoluble oligonucleotides, which are then degraded further into small acid-soluble oligonucleotides. This is Exodeoxyribonuclease 7 large subunit from Ligilactobacillus salivarius (strain UCC118) (Lactobacillus salivarius).